Here is a 143-residue protein sequence, read N- to C-terminus: Large ribosomal subunit protein uL15 (143 aa).

The segment at 1–52 is disordered; it reads MELNSIQPADGAKHYKRRVGRGIGSGLGKTSGRGHKGQKSRSGGFHKVGFEG. Residues 21-31 are compositionally biased toward gly residues; that stretch reads RGIGSGLGKTS.

This sequence belongs to the universal ribosomal protein uL15 family. In terms of assembly, part of the 50S ribosomal subunit.

Functionally, binds to the 23S rRNA. The sequence is that of Large ribosomal subunit protein uL15 from Janthinobacterium sp. (strain Marseille) (Minibacterium massiliensis).